Here is an 867-residue protein sequence, read N- to C-terminus: Zinc finger protein zfp-1 (867 aa).

Residues 5–57 (VGGCCVCADENGWTDNPLIYCDGENCEVAVHQGCYGIQEVPEGEWFCAKCTKA) form a PHD-type 1 zinc finger. The C2HC pre-PHD-type 2 zinc-finger motif lies at 69–102 (TFCCQLCPFDYGALKKTDRNGWAHVICALYIPEV). Residues 69–186 (TFCCQLCPFD…KYCGYCENHL (118 aa)) form an extended PHD2 domain (ePHD2) region. Residues 125–186 (KLCYICNEER…KYCGYCENHL (62 aa)) form a PHD-type 2 zinc finger. Disordered stretches follow at residues 267 to 311 (GSTV…SLSS), 440 to 477 (KNDM…GKSP), 503 to 586 (ADRT…QSNR), and 753 to 773 (SSGA…STAG). The segment covering 285-311 (PLTTSSRSSVAQDPSPPLTINKNSLSS) has biased composition (polar residues). The segment covering 503-512 (ADRTAAERRA) has biased composition (basic and acidic residues). The span at 516 to 527 (QSQPSTSTNGGP) shows a compositional bias: polar residues. Residues 538–550 (HTNSTNSTNHQNN) show a composition bias toward low complexity. Residues 551–573 (GLTQNAPASTSMQAGTSSNDGVI) are compositionally biased toward polar residues. Over residues 574–585 (SQNGTSSTSQSN) the composition is skewed to low complexity. Polar residues predominate over residues 758–771 (VNSNIQNHRATPST).

In terms of assembly, multimer; in vitro. Interacts (via C-terminus) with dot-1.1 to form a heterodimer known as the zfp-1-dot-1.1 complex or DotCom complex. Isoform a: Expressed at high levels in maturing oocytes, but at low levels in the rest of the germ line (at protein level). Isoform a: Not expressed in the pharynx, germ line and tail. Isoform c: Not expressed in the germ line (at protein level). Isoform c: Uniformly expressed.

It localises to the nucleus. Its subcellular location is the chromosome. Functionally, recruits the histone methyltransferase dot-1.1 to chromatin to methylate 'Lys-79' of histone H3 and activate transcription. Recognizes and binds histone H3 methylated at 'Lys-4' (H3K4me) at the promoters of target genes. During stress, the zfp-1-dot-1.1 complex also plays a role in the deubiquitination of histone H2B sites, which negatively modulates the RNA polymerase II-induced transcription of highly expressed genes. In response to stress, binds to the pdk-1 promoter to negatively regulate pdk-1 expression, which negatively modulates daf-16/FOXO-mediated gene expression. Thus, most likely via this mechanism, in response to stress, it confers a protective role against neuronal necrosis. Plays a role in Insulin/IGF-1-like signaling (IIS)- and diet restriction-mediated lifespan extension by controlling daf-16/FOXO and pha-4/FOXA recruitment to target promoters. May negatively regulate the expression of genes required for vulval development. May play a role in axon guidance in D-type motor neurons. May suppress sensitivity to RNAi. Its function is as follows. Required for migration of HSN motor neurons during embryogenesis. The sequence is that of Zinc finger protein zfp-1 from Caenorhabditis elegans.